A 277-amino-acid chain; its full sequence is NH(3)-dependent NAD(+) synthetase (277 aa).

36–43 provides a ligand contact to ATP; that stretch reads GLSGGIDS. D42 lines the Mg(2+) pocket. R118 provides a ligand contact to deamido-NAD(+). Position 138 (T138) interacts with ATP. E143 is a Mg(2+) binding site. ATP is bound by residues K167 and S189.

Belongs to the NAD synthetase family. Homodimer.

The enzyme catalyses deamido-NAD(+) + NH4(+) + ATP = AMP + diphosphate + NAD(+) + H(+). It participates in cofactor biosynthesis; NAD(+) biosynthesis; NAD(+) from deamido-NAD(+) (ammonia route): step 1/1. Functionally, catalyzes the ATP-dependent amidation of deamido-NAD to form NAD. Uses ammonia as a nitrogen source. The protein is NH(3)-dependent NAD(+) synthetase of Pelodictyon phaeoclathratiforme (strain DSM 5477 / BU-1).